A 129-amino-acid polypeptide reads, in one-letter code: DNA-directed RNA polymerase subunit omega (129 aa).

The disordered stretch occupies residues 76 to 100; it reads EVDEPEPEAVPMIASGDSSGGEDSD.

Belongs to the RNA polymerase subunit omega family. As to quaternary structure, the RNAP catalytic core consists of 2 alpha, 1 beta, 1 beta' and 1 omega subunit. When a sigma factor is associated with the core the holoenzyme is formed, which can initiate transcription.

The catalysed reaction is RNA(n) + a ribonucleoside 5'-triphosphate = RNA(n+1) + diphosphate. Promotes RNA polymerase assembly. Latches the N- and C-terminal regions of the beta' subunit thereby facilitating its interaction with the beta and alpha subunits. This Xanthobacter autotrophicus (strain ATCC BAA-1158 / Py2) protein is DNA-directed RNA polymerase subunit omega.